Reading from the N-terminus, the 488-residue chain is Endoglucanase A (488 aa).

Substrate is bound by residues His59, 63–64 (WY), Tyr90, and His125. The active-site Proton donor is the Glu163. Tyr226 contacts substrate. The active-site Nucleophile is Glu252. Substrate-binding positions include 258–259 (AT), Trp286, and 291–293 (KDE). Disordered regions lie at residues 326–362 (ESAS…AWDP) and 388–451 (EPGA…WDPT). Pro residues-rich tracts occupy residues 332–353 (PSDP…PPSD) and 405–416 (PSEPSDPPPPSE). Positions 417 to 433 (PEPDPGEPDPGEPDPGE) are enriched in acidic residues.

Belongs to the glycosyl hydrolase 5 (cellulase A) family.

The catalysed reaction is Endohydrolysis of (1-&gt;4)-beta-D-glucosidic linkages in cellulose, lichenin and cereal beta-D-glucans.. The polypeptide is Endoglucanase A (celA) (Evansella cellulosilytica (strain ATCC 21833 / DSM 2522 / FERM P-1141 / JCM 9156 / N-4) (Bacillus cellulosilyticus)).